The following is a 593-amino-acid chain: Protein PSP2 (593 aa).

Basic and acidic residues predominate over residues 56–65 (AGEHQRDGHQ). Residues 56–101 (AGEHQRDGHQQHPHGGHGPMNRSRFSNAGPFGGGSMGDFANHHHPL) form a disordered region. A phosphoserine mark is found at S150 and S238. 2 disordered regions span residues 227–248 (KPFITKTQRSKSNPFGSAKPVD) and 280–593 (DSMA…DMPL). Composition is skewed to polar residues over residues 231-241 (TKTQRSKSNPF) and 280-290 (DSMATTATGSK). At S340 the chain carries Phosphoserine. The segment covering 347–402 (SKPDKSDEFKGGDEQGFEKGGDDKAQLDVSNDKDKGSETDVDKQFTFKNVEREHSM) has biased composition (basic and acidic residues). The span at 408–426 (NGNHNNNNGNFRGSNRYRG) shows a compositional bias: low complexity. R419, R425, and R440 each carry omega-N-methylarginine. R443 carries the post-translational modification Dimethylated arginine. At R447 the chain carries Omega-N-methylarginine. Positions 449–477 (GSSYNNNNNNTNDNNNNNNNSSSNNNNGS) are enriched in low complexity. Polar residues-rich tracts occupy residues 486-497 (EEGLTSDSSLDA) and 505-516 (FTNSTSNTQQYS). Phosphoserine is present on S522. The span at 534–545 (RNNGRGNYNSSG) shows a compositional bias: low complexity. 3 positions are modified to omega-N-methylarginine: R538, R551, and R575. Positions 546–563 (MNGGSRGRGFGRGRGFGR) are enriched in gly residues. A compositionally biased stretch (low complexity) spans 578–587 (SGNYSNYNNR).

It localises to the cytoplasm. The protein localises to the P-body. It is found in the stress granule. DNA polymerase alpha mutation suppressor. Suppressor of group II intron splicing defects of a mutation in MRS2. May play a role in mitochondrial mRNA splicing. This Saccharomyces cerevisiae (strain ATCC 204508 / S288c) (Baker's yeast) protein is Protein PSP2.